The following is a 761-amino-acid chain: Prolyl endopeptidase FAP (761 aa).

Topologically, residues 1–4 (MKTW) are cytoplasmic. Residues 5–25 (LKTVFGVTTLAALALVVICIV) form a helical; Signal-anchor for type II membrane protein membrane-spanning segment. Residues 26–761 (LRPSRVYKPE…FLKQCFSLSD (736 aa)) are Extracellular-facing. 3 N-linked (GlcNAc...) asparagine glycosylation sites follow: Asn49, Asn92, and Asn99. Positions 203 and 204 each coordinate substrate. 2 N-linked (GlcNAc...) asparagine glycosylation sites follow: Asn227 and Asn314. Disulfide bonds link Cys321/Cys332, Cys438/Cys441, and Cys448/Cys466. The active-site Charge relay system is the Ser624. The cysteines at positions 643 and 756 are disulfide-linked. N-linked (GlcNAc...) asparagine glycosylation is present at Asn679. Residues Asp702 and His734 each act as charge relay system in the active site.

Belongs to the peptidase S9B family. Homodimer; homodimerization is required for activity of both plasma membrane and soluble forms. The monomer is inactive. Heterodimer with DPP4. Interacts with PLAUR; the interaction occurs at the cell surface of invadopodia membranes. Interacts with ITGB1. Interacts with ITGA3. Associates with integrin alpha-3/beta-1; the association occurs in a collagen-dependent manner at the cell surface of invadopodia membranes. Post-translationally, N-glycosylated. In terms of processing, the N-terminus may be blocked. As to expression, expressed strongly in uterus, pancreas, submaxillary gland and skin, less in lymph node, ovary, skeletal muscle, adrenal and bone marrow. Expressed in reactive stromal fibroblast in epithelial cancers. Expressed in melanocytes but not melanomas (at protein level). Detected in fibroblasts, in placenta, uterus, embryos from day 7-19 and in newborn mice (P1).

It is found in the cell surface. The protein localises to the cell membrane. It localises to the cell projection. Its subcellular location is the lamellipodium membrane. The protein resides in the invadopodium membrane. It is found in the ruffle membrane. The protein localises to the membrane. It localises to the secreted. It catalyses the reaction Hydrolysis of Pro-|-Xaa &gt;&gt; Ala-|-Xaa in oligopeptides.. The enzyme catalyses Release of an N-terminal dipeptide, Xaa-Yaa-|-Zaa-, from a polypeptide, preferentially when Yaa is Pro, provided Zaa is neither Pro nor hydroxyproline.. With respect to regulation, gelatinase activity is inhibited by serine-protease inhibitors, such as phenylmethylsulfonyl fluoride (PMSF), 4-(2-aminoethyl)-benzenesulfonyl fluoride hydrochloride (AEBSF), 4-amidino phenylsulfonyl fluoride (APSF) and diisopropyl fluorophosphate (DFP), N-ethylmaleimide (NEM) and phenylmethylsulfonyl fluoride (PMSF). Dipeptidyl peptidase activity is inhibited by 2,2'-azino-bis(3-ethylbenzthiazoline-6-sulfonic acid), diisopropylfluorophosphate (DFP). Prolyl endopeptidase activity is inhibited by the boronic acid peptide Ac-Gly-BoroPro, Ac-Gly-Pro-chloromethyl ketone and Thr-Ser-Gly-chloromethyl ketone. Its function is as follows. Cell surface glycoprotein serine protease that participates in extracellular matrix degradation and involved in many cellular processes including tissue remodeling, fibrosis, wound healing, inflammation and tumor growth. Both plasma membrane and soluble forms exhibit post-proline cleaving endopeptidase activity, with a marked preference for Ala/Ser-Gly-Pro-Ser/Asn/Ala consensus sequences, on substrate such as alpha-2-antiplasmin SERPINF2 and SPRY2. Degrade also gelatin, heat-denatured type I collagen, but not native collagen type I and IV, vibronectin, tenascin, laminin, fibronectin, fibrin or casein. Also has dipeptidyl peptidase activity, exhibiting the ability to hydrolyze the prolyl bond two residues from the N-terminus of synthetic dipeptide substrates provided that the penultimate residue is proline, with a preference for Ala-Pro, Ile-Pro, Gly-Pro, Arg-Pro and Pro-Pro. Natural neuropeptide hormones for dipeptidyl peptidase are the neuropeptide Y (NPY), peptide YY (PYY), substance P (TAC1) and brain natriuretic peptide 32 (NPPB). The plasma membrane form, in association with either DPP4, PLAUR or integrins, is involved in the pericellular proteolysis of the extracellular matrix (ECM), and hence promotes cell adhesion, migration and invasion through the ECM. Plays a role in tissue remodeling during development and wound healing. Participates in the cell invasiveness towards the ECM in malignant melanoma cancers. Enhances tumor growth progression by increasing angiogenesis, collagen fiber degradation and apoptosis and by reducing antitumor response of the immune system. Promotes glioma cell invasion through the brain parenchyma by degrading the proteoglycan brevican. Acts as a tumor suppressor in melanocytic cells through regulation of cell proliferation and survival in a serine protease activity-independent manner. The protein is Prolyl endopeptidase FAP of Mus musculus (Mouse).